The following is a 479-amino-acid chain: Anaerobic nitric oxide reductase flavorubredoxin (479 aa).

The zinc metallo-hydrolase stretch occupies residues 30 to 210; the sequence is LRGSSYNSYL…PFSRLVTPKI (181 aa). Positions 79, 81, 83, 147, 166, and 227 each coordinate Fe cation. A Flavodoxin-like domain is found at 254 to 393; sequence ITIFYDTMSN…LCREHGREIA (140 aa). FMN is bound by residues 260 to 264 and 342 to 369; these read TMSNN and AFGS…EMSL. The 52-residue stretch at 423–474 folds into the Rubredoxin-like domain; the sequence is GPRMQCSVCQWIYDPAKGEPMQDVAPGTPWSEVPDNFLCPECSLGKDVFDEL. Cys-428, Cys-431, Cys-461, and Cys-464 together coordinate Fe cation.

This sequence in the N-terminal section; belongs to the zinc metallo-hydrolase group 3 family. Homotetramer. The cofactor is Fe cation. It depends on FMN as a cofactor.

It is found in the cytoplasm. It participates in nitrogen metabolism; nitric oxide reduction. Anaerobic nitric oxide reductase; uses NADH to detoxify nitric oxide (NO), protecting several 4Fe-4S NO-sensitive enzymes. Has at least 2 reductase partners, only one of which (NorW, flavorubredoxin reductase) has been identified. NO probably binds to the di-iron center; electrons enter from the NorW at rubredoxin and are transferred sequentially to the FMN center and the di-iron center. Also able to function as an aerobic oxygen reductase. The polypeptide is Anaerobic nitric oxide reductase flavorubredoxin (Shigella flexneri serotype 5b (strain 8401)).